We begin with the raw amino-acid sequence, 103 residues long: Histone H4.1 (103 aa).

Over residues 1–14 (MSGRGKGGKGLGKG) the composition is skewed to gly residues. The segment at 1–20 (MSGRGKGGKGLGKGGAKRHR) is disordered. Lys-6 is subject to N6-acetyl-N6-methyllysine; alternate. N6-methyllysine; alternate is present on residues Lys-6, Lys-9, and Lys-13. At Lys-13 the chain carries N6-acetyl-N6-methyllysine; alternate. Residues 17-21 (KRHRK) mediate DNA binding. At Lys-92 the chain carries N6-glutaryllysine.

It belongs to the histone H4 family. The nucleosome is a histone octamer containing two molecules each of H2A, H2B, H3 and H4 assembled in one H3-H4 heterotetramer and two H2A-H2B heterodimers. The octamer wraps approximately 147 bp of DNA. Glutarylation at Lys-92 (H4K91glu) destabilizes nucleosomes by promoting dissociation of the H2A-H2B dimers from nucleosomes.

It localises to the nucleus. The protein resides in the chromosome. Core component of nucleosome. Nucleosomes wrap and compact DNA into chromatin, limiting DNA accessibility to the cellular machineries which require DNA as a template. Histones thereby play a central role in transcription regulation, DNA repair, DNA replication and chromosomal stability. DNA accessibility is regulated via a complex set of post-translational modifications of histones, also called histone code, and nucleosome remodeling. The polypeptide is Histone H4.1 (hhfA) (Emericella nidulans (strain FGSC A4 / ATCC 38163 / CBS 112.46 / NRRL 194 / M139) (Aspergillus nidulans)).